The primary structure comprises 228 residues: Cytochrome b5 domain-containing protein 1 (228 aa).

A Cytochrome b5 heme-binding domain is found at 17 to 83 (RRYFTPSEVA…DPQTRDIRKH (67 aa)). H83 is a binding site for heme.

It belongs to the cytochrome b5 family.

Its subcellular location is the cytoplasm. The protein resides in the cytoskeleton. The protein localises to the cilium axoneme. Functionally, radial spoke stalk protein that binds heme under oxidizing conditions. Required for the coordinated beating of multiple cilia maybe by functioning in a redox signaling pathway. The sequence is that of Cytochrome b5 domain-containing protein 1 (Cyb5d1) from Mus musculus (Mouse).